The primary structure comprises 348 residues: Protein pelota homolog (348 aa).

Belongs to the eukaryotic release factor 1 family. Pelota subfamily. In terms of assembly, monomer. Requires a divalent metal cation as cofactor.

The protein resides in the cytoplasm. Functionally, may function in recognizing stalled ribosomes, interact with stem-loop structures in stalled mRNA molecules, and effect endonucleolytic cleavage of the mRNA. May play a role in the release non-functional ribosomes and degradation of damaged mRNAs. Has endoribonuclease activity. The chain is Protein pelota homolog from Methanococcus maripaludis (strain C5 / ATCC BAA-1333).